Reading from the N-terminus, the 413-residue chain is Chloramphenicol resistance protein CraA (413 aa).

Helical transmembrane passes span 18–38 (LMFPLALVLFEFAVYIGNDLI), 55–75 (WAPSSMSFYLLGGASVAWLLG), 84–104 (KKVLLSGVLFFALCCFLILLT), 110–130 (FLTLRFLQGIGLSVISAVGYA), 147–167 (LMANISLLAPLLGPVLGAFLI), 170–190 (VSWHWGFVAIALLALLSWVGL), 228–248 (ALPLVGMPLMLWIALSPIILV), 260–280 (LAQFPVFLGLIVGNIVLIKII), 289–309 (VLIGLPIMLTGTLILILGVVW), 312–332 (YLIPCLLIGMTLICFGEGISF), 349–369 (TVAAAVSMLLMTSFFAMIELV), and 373–393 (YTQFHLWAFVLSAFAFIALWF).

Belongs to the major facilitator superfamily.

The protein resides in the cell inner membrane. Functionally, efflux pump that mediates resistance to chloramphenicol. This is Chloramphenicol resistance protein CraA from Acinetobacter baumannii (strain ATCC 19606 / DSM 30007 / JCM 6841 / CCUG 19606 / CIP 70.34 / NBRC 109757 / NCIMB 12457 / NCTC 12156 / 81).